Reading from the N-terminus, the 178-residue chain is Large ribosomal subunit protein uL6 (178 aa).

It belongs to the universal ribosomal protein uL6 family. In terms of assembly, part of the 50S ribosomal subunit.

In terms of biological role, this protein binds to the 23S rRNA, and is important in its secondary structure. It is located near the subunit interface in the base of the L7/L12 stalk, and near the tRNA binding site of the peptidyltransferase center. In Frankia alni (strain DSM 45986 / CECT 9034 / ACN14a), this protein is Large ribosomal subunit protein uL6.